A 443-amino-acid polypeptide reads, in one-letter code: Light-independent protochlorophyllide reductase subunit N (443 aa).

[4Fe-4S] cluster is bound by residues Cys15, Cys40, and Cys99.

This sequence belongs to the BchN/ChlN family. As to quaternary structure, protochlorophyllide reductase is composed of three subunits; BchL, BchN and BchB. Forms a heterotetramer of two BchB and two BchN subunits. The cofactor is [4Fe-4S] cluster.

The catalysed reaction is chlorophyllide a + oxidized 2[4Fe-4S]-[ferredoxin] + 2 ADP + 2 phosphate = protochlorophyllide a + reduced 2[4Fe-4S]-[ferredoxin] + 2 ATP + 2 H2O. The protein operates within porphyrin-containing compound metabolism; bacteriochlorophyll biosynthesis (light-independent). In terms of biological role, component of the dark-operative protochlorophyllide reductase (DPOR) that uses Mg-ATP and reduced ferredoxin to reduce ring D of protochlorophyllide (Pchlide) to form chlorophyllide a (Chlide). This reaction is light-independent. The NB-protein (BchN-BchB) is the catalytic component of the complex. The protein is Light-independent protochlorophyllide reductase subunit N of Heliobacterium modesticaldum (strain ATCC 51547 / Ice1).